Consider the following 539-residue polypeptide: GMP synthase [glutamine-hydrolyzing] (539 aa).

In terms of domain architecture, Glutamine amidotransferase type-1 spans 20 to 215 (TILILDFGSQ…AIEICHAKPN (196 aa)). The Nucleophile role is filled by Cys96. Catalysis depends on residues His189 and Glu191. Residues 216 to 413 (WSMENFVDKE…LGIEHSLVWR (198 aa)) form the GMPS ATP-PPase domain. 244 to 250 (SGGVDST) contacts ATP. Residues Arg317, Asp475, Lys531, and Glu537 each contribute to the XMP site.

In terms of assembly, homodimer. It depends on Mg(2+) as a cofactor.

It localises to the cytoplasm. It is found in the cytosol. The catalysed reaction is XMP + L-glutamine + ATP + H2O = GMP + L-glutamate + AMP + diphosphate + 2 H(+). It functions in the pathway purine metabolism; GMP biosynthesis; GMP from XMP (L-Gln route): step 1/1. In terms of biological role, catalyzes the conversion of xanthine monophosphate (XMP) to GMP in the presence of glutamine and ATP through an adenyl-XMP intermediate. This is GMP synthase [glutamine-hydrolyzing] from Schizosaccharomyces pombe (strain 972 / ATCC 24843) (Fission yeast).